A 211-amino-acid polypeptide reads, in one-letter code: Uridine kinase (211 aa).

12-19 serves as a coordination point for ATP; the sequence is GGSGSGKT.

Belongs to the uridine kinase family.

Its subcellular location is the cytoplasm. It carries out the reaction uridine + ATP = UMP + ADP + H(+). It catalyses the reaction cytidine + ATP = CMP + ADP + H(+). Its pathway is pyrimidine metabolism; CTP biosynthesis via salvage pathway; CTP from cytidine: step 1/3. It participates in pyrimidine metabolism; UMP biosynthesis via salvage pathway; UMP from uridine: step 1/1. In Bacillus subtilis (strain 168), this protein is Uridine kinase (udk).